The sequence spans 141 residues: Nucleoside diphosphate kinase (141 aa).

Residues Lys11, Phe59, Arg87, Thr93, Arg104, and Asn114 each coordinate ATP. His117 (pros-phosphohistidine intermediate) is an active-site residue.

It belongs to the NDK family. Homotetramer. Requires Mg(2+) as cofactor.

The protein localises to the cytoplasm. It catalyses the reaction a 2'-deoxyribonucleoside 5'-diphosphate + ATP = a 2'-deoxyribonucleoside 5'-triphosphate + ADP. It carries out the reaction a ribonucleoside 5'-diphosphate + ATP = a ribonucleoside 5'-triphosphate + ADP. In terms of biological role, major role in the synthesis of nucleoside triphosphates other than ATP. The ATP gamma phosphate is transferred to the NDP beta phosphate via a ping-pong mechanism, using a phosphorylated active-site intermediate. This is Nucleoside diphosphate kinase from Paraburkholderia xenovorans (strain LB400).